A 222-amino-acid polypeptide reads, in one-letter code: Deoxyribose-phosphate aldolase (222 aa).

The Proton donor/acceptor role is filled by Asp89. The active-site Schiff-base intermediate with acetaldehyde is the Lys152. The active-site Proton donor/acceptor is the Lys181.

It belongs to the DeoC/FbaB aldolase family. DeoC type 1 subfamily.

The protein resides in the cytoplasm. It catalyses the reaction 2-deoxy-D-ribose 5-phosphate = D-glyceraldehyde 3-phosphate + acetaldehyde. It participates in carbohydrate degradation; 2-deoxy-D-ribose 1-phosphate degradation; D-glyceraldehyde 3-phosphate and acetaldehyde from 2-deoxy-alpha-D-ribose 1-phosphate: step 2/2. In terms of biological role, catalyzes a reversible aldol reaction between acetaldehyde and D-glyceraldehyde 3-phosphate to generate 2-deoxy-D-ribose 5-phosphate. This chain is Deoxyribose-phosphate aldolase, found in Alkaliphilus oremlandii (strain OhILAs) (Clostridium oremlandii (strain OhILAs)).